Reading from the N-terminus, the 255-residue chain is Syntaxin-6 (255 aa).

Position 2 is an N-acetylserine (S2). The residue at position 2 (S2) is a Phosphoserine. Residues 2 to 168 (SMEDPFFVVK…QAQQQLIVEQ (167 aa)) are required for interaction with VPS51. Residues 2–234 (SMEDPFFVVK…VSHMTSDRRQ (233 aa)) are Cytoplasmic-facing. Residues 41 to 74 (EEIDWTTNELRNNLRSIEWDLEDLDETISIVEAN) adopt a coiled-coil conformation. A phosphoserine mark is found at S129 and S152. The t-SNARE coiled-coil homology domain maps to 163-225 (QLIVEQQDEQ…DNVMKKLAKV (63 aa)). Residues 235–255 (WCAIAILFAVLLVVLILFLVL) traverse the membrane as a helical; Anchor for type IV membrane protein segment.

It belongs to the syntaxin family. Identified in a complex containing STX6, STX12, VAMP4 and VTI1A. Binds EEA1. Interacts with VPS45A. Interacts with MARCHF2; the interaction promotes MARCHF2-mediated ubiquitination and degradation of CFTR. Interacts with MARCHF3. Interacts with GOPC. Interacts with BLTP3B (via C-terminal coiled-coil domain). Interacts with BAIAP3; this interaction is increased in the presence of calcium. Interacts with VPS13B.

The protein resides in the golgi apparatus membrane. It is found in the golgi apparatus. The protein localises to the trans-Golgi network membrane. Its subcellular location is the recycling endosome membrane. Its function is as follows. SNARE promoting movement of transport vesicles to target membranes. Targets endosomes to the trans-Golgi network, and may therefore function in retrograde trafficking. Together with SNARE STX12, promotes movement of vesicles from endosomes to the cell membrane, and may therefore function in the endocytic recycling pathway. The sequence is that of Syntaxin-6 (STX6) from Homo sapiens (Human).